Here is a 336-residue protein sequence, read N- to C-terminus: Casein kinase II subunit alpha (336 aa).

Positions tyrosine 37 to phenylalanine 322 constitute a Protein kinase domain. ATP contacts are provided by residues leucine 43–valine 51 and lysine 66. Aspartate 154 serves as the catalytic Proton acceptor.

Belongs to the protein kinase superfamily. Ser/Thr protein kinase family. CK2 subfamily. Tetramer of two alpha and two beta chains. It depends on Mg(2+) as a cofactor.

The protein localises to the nucleus. Its subcellular location is the nucleolus. The catalysed reaction is L-seryl-[protein] + ATP = O-phospho-L-seryl-[protein] + ADP + H(+). It catalyses the reaction L-threonyl-[protein] + ATP = O-phospho-L-threonyl-[protein] + ADP + H(+). Functionally, casein kinases are operationally defined by their preferential utilization of acidic proteins such as caseins as substrates. The alpha chain contains the catalytic site. May participate in Wnt signaling. The polypeptide is Casein kinase II subunit alpha (CkIIalpha) (Drosophila melanogaster (Fruit fly)).